A 302-amino-acid chain; its full sequence is Protein KTI12 homolog (302 aa).

8-15 (GQPCSGKS) lines the ATP pocket. The interval 260–273 (LRRTFVKLMGQSSL) is calmodulin-binding.

Belongs to the KTI12 family. As to quaternary structure, interacts with the elongator complex. Binds to calmodulin in a calcium-dependent manner. Expressed in roots, hypocotyls, cotyledons, shoot apices, stems, inflorescence apices, leaves and flowers.

The protein localises to the cytoplasm. The protein resides in the nucleus. In terms of biological role, elongator complex-associated factor that is not a structural subunit but rather transiently contacts the complex. Regulates both meristem activity and organ growth; acts as a positive regulator of adaxial leaf patterning by modulating both cell division and differentiation. Required for an early step in synthesis of 5-carbamoylmethyl (ncm5) groups present on uridines (ncm5U) at the wobble position in tRNA. The polypeptide is Protein KTI12 homolog (Arabidopsis thaliana (Mouse-ear cress)).